The following is a 430-amino-acid chain: ETS domain-containing protein Elk-4 (430 aa).

The ETS DNA-binding region spans 5-85 (ITLWQFLLQL…NGQKFVYKFV (81 aa)). Residues 116 to 127 (SKDVEYGGKERP) are compositionally biased toward basic and acidic residues. Residues 116–138 (SKDVEYGGKERPPQPGAKTSSRN) form a disordered region. Residue K166 forms a Glycyl lysine isopeptide (Lys-Gly) (interchain with G-Cter in SUMO2) linkage. 2 disordered regions span residues 245–279 (TTFN…DIDT) and 292–325 (PENL…KGLE). Pro residues predominate over residues 249–272 (PTPPVPSTPLPLKEPPRTPSPPLS). The span at 299–312 (PKNEDSALPEKDKT) shows a compositional bias: basic and acidic residues.

It belongs to the ETS family. As to quaternary structure, interacts with SIRT7. In terms of tissue distribution, lung and liver.

The protein localises to the nucleus. Functionally, involved in both transcriptional activation and repression. Interaction with SIRT7 leads to recruitment and stabilization of SIRT7 at promoters, followed by deacetylation of histone H3 at 'Lys-18' (H3K18Ac) and subsequent transcription repression. Forms a ternary complex with the serum response factor (SRF). Requires DNA-bound SRF for ternary complex formation and makes extensive DNA contacts to the 5'side of SRF, but does not bind DNA autonomously. The chain is ETS domain-containing protein Elk-4 (Elk4) from Mus musculus (Mouse).